The following is a 106-amino-acid chain: Iron-sulfur cluster assembly protein CyaY (106 aa).

This sequence belongs to the frataxin family. As to quaternary structure, interacts with IscS. Certain pairs of proteins can bind simultaneously to IscS; IscS-IscU-CyaY complexes can be isolated in vitro, but (IscS-TusA-CyaY) complexes cannot.

Its function is as follows. Involved in iron-sulfur (Fe-S) cluster assembly. May act as a regulator of Fe-S biogenesis. This is Iron-sulfur cluster assembly protein CyaY from Escherichia coli O157:H7.